The sequence spans 78 residues: Antitoxin VapB27 (78 aa).

Positions 1–45 (MKAVVDAAGRIVVPKPLREALGLQPGSTVEISRYGAGLHLIPTGR) constitute a SpoVT-AbrB domain.

This sequence belongs to the VapB family. Interacts with cognate toxin VapC27 and non-cognate toxins MazF6 and VapC40. Interaction with MazF6 and MazF9 partially neutralizes the toxins.

Its function is as follows. Antitoxin component of a type II toxin-antitoxin (TA) system. Cognate toxin is VapC27. Upon expression in E.coli partially counteracts the ribonuclease activity of non-cognate toxins MazF6 and MazF9. The protein is Antitoxin VapB27 (vapB27) of Mycobacterium tuberculosis (strain ATCC 25618 / H37Rv).